The following is a 607-amino-acid chain: DNA mismatch repair protein MutL (607 aa).

Belongs to the DNA mismatch repair MutL/HexB family.

In terms of biological role, this protein is involved in the repair of mismatches in DNA. It is required for dam-dependent methyl-directed DNA mismatch repair. May act as a 'molecular matchmaker', a protein that promotes the formation of a stable complex between two or more DNA-binding proteins in an ATP-dependent manner without itself being part of a final effector complex. This chain is DNA mismatch repair protein MutL, found in Gemmatimonas aurantiaca (strain DSM 14586 / JCM 11422 / NBRC 100505 / T-27).